Here is a 103-residue protein sequence, read N- to C-terminus: Large ribosomal subunit protein bL28 (103 aa).

The protein belongs to the bacterial ribosomal protein bL28 family.

The sequence is that of Large ribosomal subunit protein bL28 from Anaplasma phagocytophilum (strain HZ).